The following is a 272-amino-acid chain: tRNA pseudouridine synthase B (272 aa).

Aspartate 38 serves as the catalytic Nucleophile.

It belongs to the pseudouridine synthase TruB family. Type 1 subfamily.

The enzyme catalyses uridine(55) in tRNA = pseudouridine(55) in tRNA. Responsible for synthesis of pseudouridine from uracil-55 in the psi GC loop of transfer RNAs. This chain is tRNA pseudouridine synthase B, found in Campylobacter jejuni subsp. jejuni serotype O:2 (strain ATCC 700819 / NCTC 11168).